The chain runs to 445 residues: Methionine aminopeptidase 2-2 (445 aa).

Residues 1–92 (MAAQASEDLK…RVPISQLFPN (92 aa)) are disordered. Residues 18 to 33 (AGDSKAAAATAGQAEA) show a composition bias toward low complexity. Acidic residues predominate over residues 34-46 (GEAEDDSDDDEVD). Low complexity predominate over residues 47 to 58 (GNAAPEGAASGA). Residues 59–74 (AKKKKKRKPKKKKKGG) are compositionally biased toward basic residues. His198 contacts substrate. Positions 218, 229, and 298 each coordinate a divalent metal cation. His306 is a substrate binding site. A divalent metal cation is bound by residues Glu331 and Glu426.

It belongs to the peptidase M24A family. Methionine aminopeptidase eukaryotic type 2 subfamily. Co(2+) serves as cofactor. The cofactor is Zn(2+). It depends on Mn(2+) as a cofactor. Requires Fe(2+) as cofactor.

The protein resides in the cytoplasm. It catalyses the reaction Release of N-terminal amino acids, preferentially methionine, from peptides and arylamides.. Cotranslationally removes the N-terminal methionine from nascent proteins. The N-terminal methionine is often cleaved when the second residue in the primary sequence is small and uncharged (Met-Ala-, Cys, Gly, Pro, Ser, Thr, or Val). The protein is Methionine aminopeptidase 2-2 of Aspergillus terreus (strain NIH 2624 / FGSC A1156).